The sequence spans 782 residues: Cleavage and polyadenylation specificity factor subunit 2 (782 aa).

Over residues 407-416 (KKLEQSKEAD) the composition is skewed to basic and acidic residues. The segment at 407–449 (KKLEQSKEADIDSSDESDIEEDIDQPSAHKTKHDLMMKGEGSR) is disordered. Residues 417–430 (IDSSDESDIEEDID) show a composition bias toward acidic residues. 3 positions are modified to phosphoserine: S419, S420, and S423. Basic and acidic residues predominate over residues 439–449 (HDLMMKGEGSR). Residue S660 is modified to Phosphoserine.

The protein belongs to the metallo-beta-lactamase superfamily. RNA-metabolizing metallo-beta-lactamase-like family. CPSF2/YSH1 subfamily. Component of the cleavage and polyadenylation specificity factor (CPSF) complex, composed of CPSF1, CPSF2, CPSF3, CPSF4 and FIP1L1. Interacts with CPSF3, CSTF2 and SYMPK. Interacts with ZC3H3.

It localises to the nucleus. Component of the cleavage and polyadenylation specificity factor (CPSF) complex that play a key role in pre-mRNA 3'-end formation, recognizing the AAUAAA signal sequence and interacting with poly(A) polymerase and other factors to bring about cleavage and poly(A) addition. Involved in the histone 3' end pre-mRNA processing. The protein is Cleavage and polyadenylation specificity factor subunit 2 (CPSF2) of Homo sapiens (Human).